We begin with the raw amino-acid sequence, 155 residues long: Probable calcium-binding protein CML9 (155 aa).

EF-hand domains lie at 8–43 (EQVD…LGQN), 86–121 (ATEK…HGDR), and 122–155 (LTEE…MNNK). Residues aspartate 21, aspartate 23, aspartate 25, arginine 27, and glutamate 32 each contribute to the Ca(2+) site.

In terms of biological role, potential calcium sensor. The polypeptide is Probable calcium-binding protein CML9 (CML9) (Oryza sativa subsp. japonica (Rice)).